The primary structure comprises 68 residues: Lantibiotic mersacidin (68 aa).

The disordered stretch occupies residues methionine 1 to phenylalanine 28. Residues methionine 1–alanine 48 constitute a propeptide that is removed on maturation. The beta-methyllanthionine (Cys-Thr) cross-link spans cysteine 49 to threonine 50. Cross-links (beta-methyllanthionine (Thr-Cys)) lie at residues threonine 52–cysteine 60 and threonine 61–cysteine 66. Residues threonine 63–cysteine 68 constitute a cross-link (S-(2-aminovinyl)-3-methyl-D-cysteine (Thr-Cys)). 2,3-didehydroalanine (Ser) is present on serine 64.

This sequence belongs to the type B lantibiotic family. Maturation of lantibiotics involves the enzymatic conversion of Thr, and Ser into dehydrated AA and the formation of thioether bonds with cysteine. The carboxy-terminal beta-methyllanthionine undergoes decarboxylation. This is followed by membrane translocation and cleavage of the modified precursor.

Kills a number of Gram-positive bacteria. Acts at the level of cell wall biosynthesis by interfering with bacterial peptidoglycan biosynthesis. Specifically inhibits the conversion of the lipid II intermediate into polymeric nascent glycan strands by transglycosylation. May interact with the peptidoglycan precursor rather than with the enzyme. The sequence is that of Lantibiotic mersacidin (mrsA) from Bacillus sp. (strain HIL-Y85/54728).